A 290-amino-acid polypeptide reads, in one-letter code: MSISNYKLQTKVRLQPLVLFQIIAAYERRPKTAKMAVGTLLGRRDRCNDIIEITNSYTVQHKEQQIGEMEQFKLDTQYASEMFELNQITYPQEKIIGWYSTGKSLSRSAAALHAYYSRECGDVQPLHLLVDTTLRGGHLSTRLYCGVTMGVPGGTRGLLFTLLPLLKLNTDGDESVALRLMQKQALHPTKQLGRMLPELVHVMEATRELEQKLELVMRYINDVLARKRRPDNSIGRALHDALTSVPLLDAESFRLMFNANVRNMLMSITLSTMIKTQMELSEKLSYLPDH.

Positions 12–150 constitute an MPN domain; it reads VRLQPLVLFQ…TRLYCGVTMG (139 aa).

Belongs to the eIF-3 subunit F family. As to quaternary structure, component of the eukaryotic translation initiation factor 3 (eIF-3) complex. The eIF-3 complex interacts with pix.

Its subcellular location is the cytoplasm. Its function is as follows. Component of the eukaryotic translation initiation factor 3 (eIF-3) complex, which is involved in protein synthesis of a specialized repertoire of mRNAs and, together with other initiation factors, stimulates binding of mRNA and methionyl-tRNAi to the 40S ribosome. The eIF-3 complex specifically targets and initiates translation of a subset of mRNAs involved in cell proliferation. The polypeptide is Eukaryotic translation initiation factor 3 subunit F-2 (Drosophila virilis (Fruit fly)).